A 509-amino-acid chain; its full sequence is Methylthioalkylmalate synthase 1-1, chloroplastic (509 aa).

A chloroplast-targeting transit peptide spans 1 to 55 (MSFSPTYSIVMASPLLTSSQMIPTTGSTVGFRSILPFGSLRLTRPYKKTSLFISY). Residues 91–365 (VRVYDTTLRD…YTRIDTRQIM (275 aa)) enclose the Pyruvate carboxyltransferase domain. Asp-100, His-298, and His-300 together coordinate Mn(2+).

It belongs to the alpha-IPM synthase/homocitrate synthase family. In terms of assembly, monomer. Requires Mn(2+) as cofactor. Co(2+) is required as a cofactor.

It is found in the plastid. It localises to the chloroplast. The catalysed reaction is 4-methylsulfanyl-2-oxobutanoate + acetyl-CoA + H2O = 2-(2-methylsulfanyl)ethylmalate + CoA + H(+). It functions in the pathway secondary metabolite biosynthesis. Inhibited by EDTA, Cu(2+) and Zn(2+). Determines the side chain length of aliphatic glucosinolate structures. Involved in the biosynthesis of glucosinolate derivative natural products such as 6-(methylsulfinyl)hexylisothiocyanate (6-MSITC), a compound found in wasabi with diverse health-promoting properties. Catalyzes the conversion of 4-methylsulfanyl-2-oxobutanoate (4-MTOB) into 2-(2-methylsulfanyl)ethylmalate (2-(2-MT)EM). In Eutrema japonicum (Wasabi plant), this protein is Methylthioalkylmalate synthase 1-1, chloroplastic.